We begin with the raw amino-acid sequence, 263 residues long: Acyl-[acyl-carrier-protein]--UDP-N-acetylglucosamine O-acyltransferase (263 aa).

Belongs to the transferase hexapeptide repeat family. LpxA subfamily. Homotrimer.

The protein localises to the cytoplasm. It catalyses the reaction a (3R)-hydroxyacyl-[ACP] + UDP-N-acetyl-alpha-D-glucosamine = a UDP-3-O-[(3R)-3-hydroxyacyl]-N-acetyl-alpha-D-glucosamine + holo-[ACP]. The protein operates within glycolipid biosynthesis; lipid IV(A) biosynthesis; lipid IV(A) from (3R)-3-hydroxytetradecanoyl-[acyl-carrier-protein] and UDP-N-acetyl-alpha-D-glucosamine: step 1/6. Involved in the biosynthesis of lipid A, a phosphorylated glycolipid that anchors the lipopolysaccharide to the outer membrane of the cell. In Campylobacter jejuni subsp. jejuni serotype O:2 (strain ATCC 700819 / NCTC 11168), this protein is Acyl-[acyl-carrier-protein]--UDP-N-acetylglucosamine O-acyltransferase.